Consider the following 510-residue polypeptide: 2,3-bisphosphoglycerate-independent phosphoglycerate mutase (510 aa).

Positions 13 and 63 each coordinate Mn(2+). Residue S63 is the Phosphoserine intermediate of the active site. Substrate is bound by residues H124, 154 to 155 (RD), R186, R192, 262 to 265 (RADR), and K334. Mn(2+) contacts are provided by D401, H405, D442, H443, and H461.

The protein belongs to the BPG-independent phosphoglycerate mutase family. As to quaternary structure, monomer. Requires Mn(2+) as cofactor.

It carries out the reaction (2R)-2-phosphoglycerate = (2R)-3-phosphoglycerate. It functions in the pathway carbohydrate degradation; glycolysis; pyruvate from D-glyceraldehyde 3-phosphate: step 3/5. Catalyzes the interconversion of 2-phosphoglycerate and 3-phosphoglycerate. The protein is 2,3-bisphosphoglycerate-independent phosphoglycerate mutase of Vibrio campbellii (strain ATCC BAA-1116).